The chain runs to 377 residues: DNA replication and repair protein RecF (377 aa).

30 to 37 (GLNGSGKT) contributes to the ATP binding site.

The protein belongs to the RecF family.

It localises to the cytoplasm. The RecF protein is involved in DNA metabolism; it is required for DNA replication and normal SOS inducibility. RecF binds preferentially to single-stranded, linear DNA. It also seems to bind ATP. In Cytophaga hutchinsonii (strain ATCC 33406 / DSM 1761 / CIP 103989 / NBRC 15051 / NCIMB 9469 / D465), this protein is DNA replication and repair protein RecF.